The chain runs to 361 residues: Velvet complex subunit B (361 aa).

Disordered regions lie at residues Met1–Gln36 and Asn308–Arg340. The segment covering Pro23–Arg35 has biased composition (polar residues). The 307-residue stretch at Gln47–Ser353 folds into the Velvet domain. Low complexity predominate over residues Ser323–Pro336.

It belongs to the velvet family. VelB subfamily. Component of the heterotrimeric velvet complex composed of laeA, veA and velB; VeA acting as a bridging protein between laeA and velB. Interacts with velA. Forms a heterodimeric complex with vosA; the formation of the velB-vosA complex is light-dependent. Interacts with vosA.

Its subcellular location is the nucleus. The protein localises to the cytoplasm. Its function is as follows. Component of the velvet transcription factor complex that controls sexual/asexual developmental ratio in response to light, promoting sexual development in the darkness while stimulating asexual sporulation under illumination. The velvet complex acts as a global regulator for secondary metabolite gene expression. Component of the velB-VosA heterodimeric complex that plays a dual role in activating genes associated with spore maturation and repressing certain development-associated genes. The velB-VosA complex binds DNA through the DNA-binding domain of vosA that recognizes an 11-nucleotide consensus sequence 5'-CTGGCCGCGGC-3' consisting of two motifs in the promoters of key developmental regulatory genes. Controls conidiophore formation. In Penicillium rubens (strain ATCC 28089 / DSM 1075 / NRRL 1951 / Wisconsin 54-1255) (Penicillium chrysogenum), this protein is Velvet complex subunit B.